The primary structure comprises 734 residues: Methylcrotonoyl-CoA carboxylase subunit alpha, mitochondrial (734 aa).

The N-terminal 25 residues, 1 to 25 (MSMMTVWALRRNVRRKNHSMLVRYI), are a transit peptide targeting the mitochondrion. A Biotin carboxylation domain is found at 37–484 (CIEKILVANR…ETHFIEHHKS (448 aa)). Positions 152, 236, and 271 each coordinate ATP. The 199-residue stretch at 156–354 (KRIMGAAGVP…LVEWQIRVAN (199 aa)) folds into the ATP-grasp domain. Residues Glu311, Glu325, and Asn327 each contribute to the Mn(2+) site. Residue Arg329 is part of the active site. Phosphoserine is present on Ser645. Positions 645–666 (SEDEEGVQHRTSSETSSHPPGT) are disordered. The 77-residue stretch at 657–733 (SETSSHPPGT…SDGSALFRIK (77 aa)) folds into the Biotinyl-binding domain. Lys699 is subject to N6-biotinyllysine.

As to quaternary structure, probably a heterodimer composed of biotin-containing alpha subunits and beta subunits. The cofactor is biotin. Mn(2+) is required as a cofactor. In roots, cotyledons, leaves, flowers, ovaries, siliques and embryos.

Its subcellular location is the mitochondrion matrix. It carries out the reaction 3-methylbut-2-enoyl-CoA + hydrogencarbonate + ATP = 3-methyl-(2E)-glutaconyl-CoA + ADP + phosphate + H(+). Its pathway is amino-acid degradation; L-leucine degradation; (S)-3-hydroxy-3-methylglutaryl-CoA from 3-isovaleryl-CoA: step 2/3. Its function is as follows. Biotin-attachment subunit of the 3-methylcrotonyl-CoA carboxylase, an enzyme that catalyzes the conversion of 3-methylcrotonyl-CoA to 3-methylglutaconyl-CoA, a critical step for leucine and isovaleric acid catabolism. The protein is Methylcrotonoyl-CoA carboxylase subunit alpha, mitochondrial (MCCA) of Arabidopsis thaliana (Mouse-ear cress).